The chain runs to 1170 residues: DNA-directed RNA polymerase subunit beta' (1170 aa).

Residues Cys-60, Cys-62, Cys-75, and Cys-78 each contribute to the Zn(2+) site. 3 residues coordinate Mg(2+): Asp-449, Asp-451, and Asp-453. The Zn(2+) site is built by Cys-774, Cys-848, Cys-855, and Cys-858. The tract at residues 1145 to 1170 (EPGEENGEPGGERLYGMDELYGETAN) is disordered.

Belongs to the RNA polymerase beta' chain family. In terms of assembly, the RNAP catalytic core consists of 2 alpha, 1 beta, 1 beta' and 1 omega subunit. When a sigma factor is associated with the core the holoenzyme is formed, which can initiate transcription. It depends on Mg(2+) as a cofactor. Requires Zn(2+) as cofactor.

It carries out the reaction RNA(n) + a ribonucleoside 5'-triphosphate = RNA(n+1) + diphosphate. Its function is as follows. DNA-dependent RNA polymerase catalyzes the transcription of DNA into RNA using the four ribonucleoside triphosphates as substrates. The polypeptide is DNA-directed RNA polymerase subunit beta' (Pelotomaculum thermopropionicum (strain DSM 13744 / JCM 10971 / SI)).